The primary structure comprises 805 residues: Ubiquitin carboxyl-terminal hydrolase 5 (805 aa).

Positions 159–283 (HGDALLLIDV…WVKLGGAYQS (125 aa)) constitute a Rhodanese domain. Positions 359–380 (RNSPTVQKFSPHPPTTLSKLNT) are disordered. Residues 446 to 804 (VGLENIGNCC…SAYVLFYERI (359 aa)) form the USP domain. Cysteine 455 acts as the Nucleophile in catalysis. Residue histidine 761 is the Proton acceptor of the active site.

Belongs to the peptidase C19 family.

The catalysed reaction is Thiol-dependent hydrolysis of ester, thioester, amide, peptide and isopeptide bonds formed by the C-terminal Gly of ubiquitin (a 76-residue protein attached to proteins as an intracellular targeting signal).. In Saccharomyces cerevisiae (strain ATCC 204508 / S288c) (Baker's yeast), this protein is Ubiquitin carboxyl-terminal hydrolase 5 (UBP5).